The following is a 335-amino-acid chain: UPF0104 membrane protein PH1989 (335 aa).

A run of 8 helical transmembrane segments spans residues Tyr4 to Glu24, Asp34 to Val54, Gly62 to Leu82, Ile122 to Ile142, Leu148 to Phe168, Leu231 to Leu251, Ala266 to Val286, and Val304 to Val324.

The protein belongs to the UPF0104 family.

The protein localises to the cell membrane. The polypeptide is UPF0104 membrane protein PH1989 (Pyrococcus horikoshii (strain ATCC 700860 / DSM 12428 / JCM 9974 / NBRC 100139 / OT-3)).